We begin with the raw amino-acid sequence, 215 residues long: Cytidylate kinase (215 aa).

10 to 18 lines the ATP pocket; the sequence is GPAASGKGT.

The protein belongs to the cytidylate kinase family. Type 1 subfamily.

It localises to the cytoplasm. It carries out the reaction CMP + ATP = CDP + ADP. It catalyses the reaction dCMP + ATP = dCDP + ADP. The sequence is that of Cytidylate kinase from Bartonella tribocorum (strain CIP 105476 / IBS 506).